We begin with the raw amino-acid sequence, 241 residues long: Small ribosomal subunit protein uS2 (241 aa).

The protein belongs to the universal ribosomal protein uS2 family.

The protein is Small ribosomal subunit protein uS2 of Escherichia coli (strain 55989 / EAEC).